A 115-amino-acid chain; its full sequence is MGTGLRSQSLREPRPSYGKLQEPWGRPQEGQLRRALSLRQGQEKSRSQGLERGTEGPDATAQERVPGSLGDTEQLIQAQRRGSRWWLRRYQQVRRRWESFVAIFPSVTLSQPASP.

Residues 1–74 (MGTGLRSQSL…VPGSLGDTEQ (74 aa)) form a disordered region.

This is an uncharacterized protein from Homo sapiens (Human).